Here is a 679-residue protein sequence, read N- to C-terminus: Sodium-dependent phosphate transporter 1 (679 aa).

6 helical membrane-spanning segments follow: residues 21–41 (YLWM…SVGA), 62–82 (ACIL…AKVS), 100–120 (GLLM…QLVA), 158–178 (IVMS…ILFF), 203–223 (ACTV…LLGF), and 230–250 (GTIL…WFFV). Phosphoserine occurs at positions 265 and 269. The tract at residues 268-288 (ESPLMEKKNSLKEDHEETKLS) is disordered. A compositionally biased stretch (basic and acidic residues) spans 271–286 (LMEKKNSLKEDHEETK). Transmembrane regions (helical) follow at residues 511-531 (VSLL…FAHG), 558-578 (VATP…GLWV), 600-620 (FSIE…GLPI), and 650-670 (IFMA…AIMA). Residues 550–558 (DTGDVSSKV) form an a region.

The protein belongs to the inorganic phosphate transporter (PiT) (TC 2.A.20) family.

The protein localises to the cell membrane. The enzyme catalyses 2 Na(+)(out) + phosphate(out) = 2 Na(+)(in) + phosphate(in). Its function is as follows. Sodium-phosphate symporter which preferentially transports the monovalent form of phosphate with a stoichiometry of two sodium ions per phosphate ion. May play a role in extracellular matrix and cartilage calcification as well as in vascular calcification. Essential for cell proliferation but this function is independent of its phosphate transporter activity. This Pongo abelii (Sumatran orangutan) protein is Sodium-dependent phosphate transporter 1 (SLC20A1).